Consider the following 565-residue polypeptide: MLLKGFMLSLVLYAVYHLASNGGQFMFDFSGQSKWERAQSEVRQAILDSWHTYEKYGWGYDVYHPIKQEGENMGPKPLGWMIVDSLDTLMIMDCPEEVSRARDWIKNDLDYTFDYNVNTFETTIRMLGGLLSAYHFSNDDVYLDKAVQLANALHGAYDSPSGIPYSSVNLKSGKGIKNHVDNGASSTAEAATVQLEMKYLSKLTGEILWWNLAEKVMQVLESNKPQDGLVPIYVNPDTGKYQGHLIRLGSRGDSYYEYLLKQYLQTNKQELVYWDMYRESVEGVKKHLVSDSYPSGLTFIGELDNGIGGKLSTKMDHLVCFYGGLLALGATGGLTLNEAQSLKSWNEEREADFKLGEELTYTCYKMYHDVSPTGLSPEIVVFNEDTSKSKDFIIKPLDRHNLQRPETVESLFYLYRLTGDVKYREMGYEIFQNFIKYTKVVNSEGEVSFSSLSDVTSFDSNGLPKFKDNTESFWWAETLKYLYLLFDDTNKIPLTDYVFNTEAHPFPRFDTNDYFKTGWRRKIDENEKAQMRESKVIDKSNLPEAQPVDKSADQEAKEIIEEIAG.

An intrachain disulfide couples Cys-320 to Cys-363. The active-site Proton donor is the Glu-378. Thr-501 is a Ca(2+) binding site. 2 stretches are compositionally biased toward basic and acidic residues: residues 526-538 (NEKA…KVID) and 550-565 (KSAD…EIAG). Positions 526–565 (NEKAQMRESKVIDKSNLPEAQPVDKSADQEAKEIIEEIAG) are disordered.

Belongs to the glycosyl hydrolase 47 family. Requires Ca(2+) as cofactor.

It catalyses the reaction N(4)-(alpha-D-Man-(1-&gt;2)-alpha-D-Man-(1-&gt;2)-alpha-D-Man-(1-&gt;3)-[alpha-D-Man-(1-&gt;2)-alpha-D-Man-(1-&gt;3)-[alpha-D-Man-(1-&gt;2)-alpha-D-Man-(1-&gt;6)]-alpha-D-Man-(1-&gt;6)]-beta-D-Man-(1-&gt;4)-beta-D-GlcNAc-(1-&gt;4)-beta-D-GlcNAc)-L-asparaginyl-[protein] (N-glucan mannose isomer 9A1,2,3B1,2,3) + 4 H2O = N(4)-(alpha-D-Man-(1-&gt;3)-[alpha-D-Man-(1-&gt;3)-[alpha-D-Man-(1-&gt;6)]-alpha-D-Man-(1-&gt;6)]-beta-D-Man-(1-&gt;4)-beta-D-GlcNAc-(1-&gt;4)-beta-D-GlcNAc)-L-asparaginyl-[protein] (N-glucan mannose isomer 5A1,2) + 4 beta-D-mannose. The catalysed reaction is N(4)-(alpha-D-Man-(1-&gt;2)-alpha-D-Man-(1-&gt;2)-alpha-D-Man-(1-&gt;3)-[alpha-D-Man-(1-&gt;3)-[alpha-D-Man-(1-&gt;2)-alpha-D-Man-(1-&gt;6)]-alpha-D-Man-(1-&gt;6)]-beta-D-Man-(1-&gt;4)-beta-D-GlcNAc-(1-&gt;4)-beta-D-GlcNAc)-L-asparaginyl-[protein] (N-glucan mannose isomer 8A1,2,3B1,3) + 3 H2O = N(4)-(alpha-D-Man-(1-&gt;3)-[alpha-D-Man-(1-&gt;3)-[alpha-D-Man-(1-&gt;6)]-alpha-D-Man-(1-&gt;6)]-beta-D-Man-(1-&gt;4)-beta-D-GlcNAc-(1-&gt;4)-beta-D-GlcNAc)-L-asparaginyl-[protein] (N-glucan mannose isomer 5A1,2) + 3 beta-D-mannose. The protein operates within protein modification; protein glycosylation. In terms of biological role, involved in the maturation of Asn-linked oligosaccharides. Trim a single alpha-1,2-linked mannose residue from Man(9)GlcNAc(2) to produce Man(8)GlcNAc(2). This chain is Mannosyl-oligosaccharide 1,2-alpha-mannosidase (MNS1), found in Candida albicans (Yeast).